Reading from the N-terminus, the 109-residue chain is UPF0060 membrane protein PA3275 (109 aa).

Transmembrane regions (helical) follow at residues 5 to 25, 27 to 47, 59 to 79, and 84 to 104; these read FWFVLAAFCEIAGCYAFYLWL, LGKSALWVLPGLLSLTLFALL, AYAAYGGIYVAASLFWLAFVE, and LWSDWLGVALCVVGASVVLFG.

Belongs to the UPF0060 family.

Its subcellular location is the cell inner membrane. The polypeptide is UPF0060 membrane protein PA3275 (Pseudomonas aeruginosa (strain ATCC 15692 / DSM 22644 / CIP 104116 / JCM 14847 / LMG 12228 / 1C / PRS 101 / PAO1)).